We begin with the raw amino-acid sequence, 327 residues long: Phenylalanine--tRNA ligase alpha subunit (327 aa).

A Mg(2+)-binding site is contributed by glutamate 252.

This sequence belongs to the class-II aminoacyl-tRNA synthetase family. Phe-tRNA synthetase alpha subunit type 1 subfamily. As to quaternary structure, tetramer of two alpha and two beta subunits. Mg(2+) serves as cofactor.

Its subcellular location is the cytoplasm. The enzyme catalyses tRNA(Phe) + L-phenylalanine + ATP = L-phenylalanyl-tRNA(Phe) + AMP + diphosphate + H(+). The chain is Phenylalanine--tRNA ligase alpha subunit from Haemophilus ducreyi (strain 35000HP / ATCC 700724).